A 207-amino-acid chain; its full sequence is Guanylate kinase (207 aa).

A Guanylate kinase-like domain is found at 4-184; sequence GTLYIVSAPS…ALLDLKTIIR (181 aa). Residue 11–18 coordinates ATP; sequence APSGAGKS.

It belongs to the guanylate kinase family.

The protein localises to the cytoplasm. It catalyses the reaction GMP + ATP = GDP + ADP. In terms of biological role, essential for recycling GMP and indirectly, cGMP. This is Guanylate kinase from Sodalis glossinidius (strain morsitans).